The chain runs to 559 residues: MEKPVVISQRTGKPKRRKAHRACIHCQRTHLTCDNNRPCERCVARGFADTCVDGVRKKLKYLDDKEDNKPSKGLSPAPGVNVQPKLSPATRSARSSSAGFPDTKGNMQQQHMGNMPVPNTPQNGHPNLGTPGMAHTNLQGPQRQGAQQPQGGQSSTPSQLPADYLIHQQLLATEINQLGDLGRTGEGDFSSDWFSDLQLSGHSFQSVATNMEYSILSNMVYSSGQPNSAVSNSLLLGNNSQSPNTHSPHNQDQPTPQAATPSAKIKQLIESNGLSAKDLNQYPLAGEFVNDTFLTVPEIVAFNETRRNVKDSELTTDEKLRPLSFAVAAGQPQNTNGNGNGSEAPDSPSKSIFSSGALEAVYSNLPDYTDPIQVYTNITKPFSYTPGYHGLISYLKGRFNKQQLVQMTKYMAEYRPSFIACTNSLKEEDLVFMEQCFQRALLEYQKFISFSGTPTLVWRRTGQLAAVGKEFCQLSGWSEQRLIGQQTFIVELLDDNSVLEYFELFSRIAFGDSRGATMADCTLLTPTGAKIKTSSIWTLKRDVFGNPMMIVGNFLPILS.

Residues 23-51 constitute a DNA-binding region (zn(2)-C6 fungal-type); the sequence is CIHCQRTHLTCDNNRPCERCVARGFADTC. 3 disordered regions span residues 63-159, 231-263, and 329-349; these read DDKE…TPSQ, SNSL…TPSA, and AGQP…DSPS. 2 stretches are compositionally biased toward low complexity: residues 139–159 and 231–244; these read QGPQ…TPSQ and SNSL…QSPN. The segment covering 245-260 has biased composition (polar residues); it reads THSPHNQDQPTPQAAT. A PAS domain is found at 440–512; that stretch reads ALLEYQKFIS…ELFSRIAFGD (73 aa).

This sequence belongs to the ERT1/acuK family.

The protein resides in the nucleus. Transcription factor which regulates nonfermentable carbon utilization. Activator of gluconeogenetic genes. The polypeptide is Transcription activator of gluconeogenesis ERT1-2 (ERT1-2) (Yarrowia lipolytica (strain CLIB 122 / E 150) (Yeast)).